The sequence spans 234 residues: Endonuclease V (234 aa).

Asp46 and Asp116 together coordinate Mg(2+).

It belongs to the endonuclease V family. Mg(2+) serves as cofactor.

It is found in the cytoplasm. It carries out the reaction Endonucleolytic cleavage at apurinic or apyrimidinic sites to products with a 5'-phosphate.. Functionally, DNA repair enzyme involved in the repair of deaminated bases. Selectively cleaves double-stranded DNA at the second phosphodiester bond 3' to a deoxyinosine leaving behind the intact lesion on the nicked DNA. In Clostridium acetobutylicum (strain ATCC 824 / DSM 792 / JCM 1419 / IAM 19013 / LMG 5710 / NBRC 13948 / NRRL B-527 / VKM B-1787 / 2291 / W), this protein is Endonuclease V.